The following is a 654-amino-acid chain: Endoplasmic reticulum chaperone BiP (654 aa).

The signal sequence occupies residues 1 to 18; sequence MKFPMVAAALLLLCAVRA. Residues 1-80 form a required for interaction with ELAPOR1 region; that stretch reads MKFPMVAAAL…EGERLIGDAA (80 aa). Residue 36–39 participates in ATP binding; sequence GTTY. Ser-86 is modified (phosphoserine). Residue Lys-96 participates in ATP binding. Lys-125 carries the post-translational modification N6-acetyllysine. Residues 125–280 are nucleotide-binding (NBD); sequence KPYIQVDIGG…KKKTGKDVRK (156 aa). Tyr-160 carries the 3'-nitrotyrosine modification. Position 213 is an N6-acetyllysine (Lys-213). 227–229 provides a ligand contact to ATP; that stretch reads GGT. Lys-271 carries the N6-acetyllysine modification. An ATP-binding site is contributed by 293–300; it reads EKAKRALS. Lys-326 is subject to N6-acetyllysine. A Glycyl lysine isopeptide (Lys-Gly) (interchain with G-Cter in SUMO2) cross-link involves residue Lys-352. Lys-353 is modified (N6-acetyllysine; alternate). A Glycyl lysine isopeptide (Lys-Gly) (interchain with G-Cter in SUMO1); alternate cross-link involves residue Lys-353. 364-367 is a binding site for ATP; that stretch reads GSTR. Residues 409–419 are interdomain linker; that stretch reads QDTGDLVLLDV. The interval 420 to 500 is substrate-binding (SBD); the sequence is CPLTLGIETV…PRGVPQIEVT (81 aa). Lys-447 carries the post-translational modification N6-succinyllysine. The residue at position 492 (Arg-492) is an Omega-N-methylarginine. Thr-518 carries the O-AMP-threonine; alternate modification. Thr-518 carries the post-translational modification Phosphothreonine; alternate. Residue Lys-585 is modified to N6,N6,N6-trimethyllysine; by METTL21A; in vitro. Lys-585 carries the post-translational modification N6,N6-dimethyllysine; alternate. N6-methyllysine; alternate is present on Lys-585. Lys-591 carries the post-translational modification N6-methyllysine. The segment at 632–654 is disordered; sequence SKLYGSAGPPPTGEEDTSEKDEL. Residues Thr-643 and Thr-648 each carry the phosphothreonine modification. Residues 644-654 are compositionally biased toward acidic residues; it reads GEEDTSEKDEL. Ser-649 bears the Phosphoserine mark. A Prevents secretion from ER motif is present at residues 651–654; sequence KDEL.

The protein belongs to the heat shock protein 70 family. Monomer and homooligomer; homooligomerization via the interdomain linker inactivates the chaperone activity and acts as a storage of HSPA5/BiP molecules. Interacts with DNAJC1 (via J domain). Component of an EIF2 complex at least composed of CELF1/CUGBP1, CALR, CALR3, EIF2S1, EIF2S2, HSP90B1 and HSPA5. Part of a large chaperone multiprotein complex comprising DNAJB11, HSP90B1, HSPA5, HYOU, PDIA2, PDIA4, PDIA6, PPIB, SDF2L1, UGGT1 and very small amounts of ERP29, but not, or at very low levels, CALR nor CANX. Interacts with TMEM132A and TRIM21. May form a complex with ERLEC1, OS9, SEL1L and SYVN1. Interacts with DNAJC10. Interacts with DNAJB9/ERdj4; leading to recruit HSPA5/BiP to ERN1/IRE1. Interacts with ERN1/IRE1 (via luminal domain); the interaction takes place following interaction with DNAJB9/ERdj4 and leads to inactivate ERN1/IRE1, the interaction also competitively inhibits ERN1 interaction with MANF. Interacts directly with MANF (via SAP domain); the interaction inhibits ATP binding to HSPA5/BiP and subsequent nucleotide exchange. Interacts with EIF2AK3/PERK (via luminal domain); interaction leads to inactivate EIF2AK3/PERK. Interacts with MX1. Interacts with METTL23. Interacts with CEMIP; the interaction induces calcium leakage from the endoplasmic reticulum and cell migration. Interacts with PCSK4 form; the interaction takes place in the endoplasmic reticulum. Interacts with CIPC. Interacts with CCDC88B (via C-terminus); the interaction opposes ERN1-mediated JNK activation, protecting against apoptosis. Interacts with INPP5K; necessary for INPP5K localization at the endoplasmic reticulum. Interacts with LOXL2; leading to activate the ERN1/IRE1-XBP1 pathway of the unfolded protein response. Interacts with CLU under stressed condition; interaction increases CLU protein stability; facilitates its retrotranslocation and redistribution to the mitochondria; cooperatively suppress stress-induced apoptosis by stabilizing mitochondrial membrane integrity. Interacts with CCDC47. Interacts with CLN3. Interacts with ELAPOR1; may regulate the function of HSPA5 in apoptosis and cell proliferation. Interacts with CASP7. Interacts with ILDR2; the interaction stabilizes ILDR2 expression. Interacts with ADAM7. In terms of processing, in unstressed cells, AMPylation at Thr-518 by FICD inactivates the chaperome activity: AMPylated form is locked in a relatively inert state and only weakly stimulated by J domain-containing proteins. In response to endoplasmic reticulum stress, de-AMPylation by the same protein, FICD, restores the chaperone activity.

The protein resides in the endoplasmic reticulum lumen. It localises to the melanosome. Its subcellular location is the cytoplasm. It is found in the cell surface. It catalyses the reaction ATP + H2O = ADP + phosphate + H(+). With respect to regulation, the chaperone activity is regulated by ATP-induced allosteric coupling of the nucleotide-binding (NBD) and substrate-binding (SBD) domains. In the ADP-bound and nucleotide-free (apo) states, the two domains have little interaction. In contrast, in the ATP-bound state the two domains are tightly coupled, which results in drastically accelerated kinetics in both binding and release of polypeptide substrates. J domain-containing co-chaperones (DNAJB9/ERdj4 or DNAJC10/ERdj5) stimulate the ATPase activity and are required for efficient substrate recognition by HSPA5/BiP. Homooligomerization inactivates participating HSPA5/BiP protomers and probably act as reservoirs to store HSPA5/BiP molecules when they are not needed by the cell. Functionally, endoplasmic reticulum chaperone that plays a key role in protein folding and quality control in the endoplasmic reticulum lumen. Involved in the correct folding of proteins and degradation of misfolded proteins via its interaction with DNAJC10/ERdj5, probably to facilitate the release of DNAJC10/ERdj5 from its substrate. Acts as a key repressor of the EIF2AK3/PERK and ERN1/IRE1-mediated unfolded protein response (UPR). In the unstressed endoplasmic reticulum, recruited by DNAJB9/ERdj4 to the luminal region of ERN1/IRE1, leading to disrupt the dimerization of ERN1/IRE1, thereby inactivating ERN1/IRE1. Also binds and inactivates EIF2AK3/PERK in unstressed cells. Accumulation of misfolded protein in the endoplasmic reticulum causes release of HSPA5/BiP from ERN1/IRE1 and EIF2AK3/PERK, allowing their homodimerization and subsequent activation. Plays an auxiliary role in post-translational transport of small presecretory proteins across endoplasmic reticulum (ER). May function as an allosteric modulator for SEC61 channel-forming translocon complex, likely cooperating with SEC62 to enable the productive insertion of these precursors into SEC61 channel. Appears to specifically regulate translocation of precursors having inhibitory residues in their mature region that weaken channel gating. May also play a role in apoptosis and cell proliferation. In Cricetulus griseus (Chinese hamster), this protein is Endoplasmic reticulum chaperone BiP.